A 778-amino-acid chain; its full sequence is Kin of IRRE-like protein 3 (778 aa).

The N-terminal stretch at M1–G21 is a signal peptide. Over L22–A535 the chain is Extracellular. Ig-like C2-type domains lie at Y48–T142, P147–T243, P249–D330, P335–T415, and P419–K515. C69 and C127 form a disulfide bridge. N167 carries N-linked (GlcNAc...) asparagine glycosylation. Cysteines 170 and 227 form a disulfide. N253 carries N-linked (GlcNAc...) asparagine glycosylation. C271 and C314 are disulfide-bonded. An N-linked (GlcNAc...) asparagine glycan is attached at N324. 2 cysteine pairs are disulfide-bonded: C356-C398 and C440-C499. N-linked (GlcNAc...) asparagine glycosylation occurs at N498. The chain crosses the membrane as a helical span at residues V536–V556. At A557–V778 the chain is on the cytoplasmic side. Residues C727–K736 show a composition bias toward polar residues. The disordered stretch occupies residues C727–V778. A compositionally biased stretch (low complexity) spans K748–Q762.

It belongs to the immunoglobulin superfamily. As to quaternary structure, homodimer; mediates homophilic interactions to promote cell adhesion. Interacts with NPHS1; forms heterodimers with NPHS1. Interacts with NPHS2/podocin (via the C-terminus). Interacts with CASK. Interacts (via extracellular region) with MAP1B. Interacts (via extracellular region) with MYO16. Interacts (via intracellular region) with ATP1B1. Interacts (via intracellular region) with SHMT2. Interacts (via intracellular region) with UFC1. Undergoes proteolysis by a metalloprotease and gives rise to a soluble form. In terms of tissue distribution, expressed in fetal and adult brain. Also expressed in kidney, specifically in podocytes of kidney glomeruli. Also expressed in skeletal muscle.

Its subcellular location is the cell membrane. The protein resides in the secreted. Functionally, synaptic adhesion molecule required for the formation of target-specific synapses. Required for formation of target-specific synapses at hippocampal mossy fiber synapses. Required for formation of mossy fiber filopodia, the synaptic structures connecting dentate granule and GABA neurons. Probably acts as a homophilic adhesion molecule that promotes trans-cellular interactions and stabilize mossy fiber filipodia contact and subsequent synapse formation. Required for the coalescence of vomeronasal sensory neuron axons. May be involved in the hematopoietic supportive capacity of stroma cells; the secreted extracellular domain is directly responsible for supporting hematopoietic stem cells. This chain is Kin of IRRE-like protein 3, found in Homo sapiens (Human).